The following is a 249-amino-acid chain: tRNA (guanine-N(1)-)-methyltransferase (249 aa).

Residues Gly-113 and 133–138 contribute to the S-adenosyl-L-methionine site; that span reads VGDYVL.

This sequence belongs to the RNA methyltransferase TrmD family. As to quaternary structure, homodimer.

It is found in the cytoplasm. It carries out the reaction guanosine(37) in tRNA + S-adenosyl-L-methionine = N(1)-methylguanosine(37) in tRNA + S-adenosyl-L-homocysteine + H(+). Functionally, specifically methylates guanosine-37 in various tRNAs. The protein is tRNA (guanine-N(1)-)-methyltransferase of Tolumonas auensis (strain DSM 9187 / NBRC 110442 / TA 4).